A 163-amino-acid polypeptide reads, in one-letter code: Nucleotide-binding protein CYA_0935 (163 aa).

It belongs to the YajQ family.

Nucleotide-binding protein. This Synechococcus sp. (strain JA-3-3Ab) (Cyanobacteria bacterium Yellowstone A-Prime) protein is Nucleotide-binding protein CYA_0935.